The sequence spans 341 residues: Putative amino-acid ABC transporter-binding protein YhdW (341 aa).

Residues 1 to 19 form the signal peptide; sequence MKKMMIATLAAASVLLAVA.

It belongs to the bacterial solute-binding protein 3 family.

It localises to the periplasm. Functionally, probably part of the binding-protein-dependent transport system YdhWXYZ for an amino acid. This is Putative amino-acid ABC transporter-binding protein YhdW (yhdW) from Escherichia coli (strain K12).